A 422-amino-acid chain; its full sequence is 3-isopropylmalate dehydratase large subunit (422 aa).

The [4Fe-4S] cluster site is built by cysteine 303, cysteine 363, and cysteine 366.

This sequence belongs to the aconitase/IPM isomerase family. LeuC type 2 subfamily. In terms of assembly, heterodimer of LeuC and LeuD. Requires [4Fe-4S] cluster as cofactor.

The catalysed reaction is (2R,3S)-3-isopropylmalate = (2S)-2-isopropylmalate. The protein operates within amino-acid biosynthesis; L-leucine biosynthesis; L-leucine from 3-methyl-2-oxobutanoate: step 2/4. Its function is as follows. Catalyzes the isomerization between 2-isopropylmalate and 3-isopropylmalate, via the formation of 2-isopropylmaleate. The polypeptide is 3-isopropylmalate dehydratase large subunit (Wolinella succinogenes (strain ATCC 29543 / DSM 1740 / CCUG 13145 / JCM 31913 / LMG 7466 / NCTC 11488 / FDC 602W) (Vibrio succinogenes)).